The chain runs to 196 residues: Imidazoleglycerol-phosphate dehydratase (196 aa).

Belongs to the imidazoleglycerol-phosphate dehydratase family.

It localises to the cytoplasm. It catalyses the reaction D-erythro-1-(imidazol-4-yl)glycerol 3-phosphate = 3-(imidazol-4-yl)-2-oxopropyl phosphate + H2O. Its pathway is amino-acid biosynthesis; L-histidine biosynthesis; L-histidine from 5-phospho-alpha-D-ribose 1-diphosphate: step 6/9. This chain is Imidazoleglycerol-phosphate dehydratase, found in Clostridium botulinum (strain 657 / Type Ba4).